A 256-amino-acid polypeptide reads, in one-letter code: Proteasome subunit alpha (256 aa).

The segment at 235–256 (ELDSNGSDGNGDAPELNGGSSD) is disordered.

The protein belongs to the peptidase T1A family. As to quaternary structure, the 20S proteasome core is composed of 14 alpha and 14 beta subunits that assemble into four stacked heptameric rings, resulting in a barrel-shaped structure. The two inner rings, each composed of seven catalytic beta subunits, are sandwiched by two outer rings, each composed of seven alpha subunits. The catalytic chamber with the active sites is on the inside of the barrel. Has a gated structure, the ends of the cylinder being occluded by the N-termini of the alpha-subunits. Is capped by the proteasome-associated ATPase, ARC.

It is found in the cytoplasm. Its pathway is protein degradation; proteasomal Pup-dependent pathway. With respect to regulation, the formation of the proteasomal ATPase ARC-20S proteasome complex, likely via the docking of the C-termini of ARC into the intersubunit pockets in the alpha-rings, may trigger opening of the gate for substrate entry. Interconversion between the open-gate and close-gate conformations leads to a dynamic regulation of the 20S proteasome proteolysis activity. Functionally, component of the proteasome core, a large protease complex with broad specificity involved in protein degradation. In Mycolicibacterium paratuberculosis (strain ATCC BAA-968 / K-10) (Mycobacterium paratuberculosis), this protein is Proteasome subunit alpha.